The sequence spans 464 residues: 3-isopropylmalate dehydratase large subunit (464 aa).

Residues cysteine 337, cysteine 397, and cysteine 400 each coordinate [4Fe-4S] cluster.

It belongs to the aconitase/IPM isomerase family. LeuC type 1 subfamily. Heterodimer of LeuC and LeuD. It depends on [4Fe-4S] cluster as a cofactor.

The enzyme catalyses (2R,3S)-3-isopropylmalate = (2S)-2-isopropylmalate. Its pathway is amino-acid biosynthesis; L-leucine biosynthesis; L-leucine from 3-methyl-2-oxobutanoate: step 2/4. Functionally, catalyzes the isomerization between 2-isopropylmalate and 3-isopropylmalate, via the formation of 2-isopropylmaleate. This is 3-isopropylmalate dehydratase large subunit from Bacillus cereus (strain ATCC 10987 / NRS 248).